Consider the following 184-residue polypeptide: UPF0398 protein BC_1561 (184 aa).

The protein belongs to the UPF0398 family.

This chain is UPF0398 protein BC_1561, found in Bacillus cereus (strain ATCC 14579 / DSM 31 / CCUG 7414 / JCM 2152 / NBRC 15305 / NCIMB 9373 / NCTC 2599 / NRRL B-3711).